The primary structure comprises 38 residues: Photosystem II reaction center protein L (38 aa).

Residues 17 to 37 (SLYWGLLLIFVLAVPFSNYFF) form a helical membrane-spanning segment.

The protein belongs to the PsbL family. In terms of assembly, PSII is composed of 1 copy each of membrane proteins PsbA, PsbB, PsbC, PsbD, PsbE, PsbF, PsbH, PsbI, PsbJ, PsbK, PsbL, PsbM, PsbT, PsbX, PsbY, PsbZ, Psb30/Ycf12, at least 3 peripheral proteins of the oxygen-evolving complex and a large number of cofactors. It forms dimeric complexes.

Its subcellular location is the plastid. The protein resides in the chloroplast thylakoid membrane. Its function is as follows. One of the components of the core complex of photosystem II (PSII). PSII is a light-driven water:plastoquinone oxidoreductase that uses light energy to abstract electrons from H(2)O, generating O(2) and a proton gradient subsequently used for ATP formation. It consists of a core antenna complex that captures photons, and an electron transfer chain that converts photonic excitation into a charge separation. This subunit is found at the monomer-monomer interface and is required for correct PSII assembly and/or dimerization. The protein is Photosystem II reaction center protein L of Pinus thunbergii (Japanese black pine).